Consider the following 95-residue polypeptide: UPF0125 protein BUsg_244 (95 aa).

The protein belongs to the UPF0125 (RnfH) family.

This chain is UPF0125 protein BUsg_244, found in Buchnera aphidicola subsp. Schizaphis graminum (strain Sg).